We begin with the raw amino-acid sequence, 233 residues long: NAD(P)H-hydrate epimerase (233 aa).

Residues 15–218 (SQQFDVELMS…KLQEKYNFIV (204 aa)) enclose the YjeF N-terminal domain. 67–71 (NNGGD) contacts (6S)-NADPHX. Residues asparagine 68 and aspartate 128 each contribute to the K(+) site. (6S)-NADPHX is bound by residues 132–138 (GFSFKPP), tyrosine 143, and aspartate 161. Position 164 (serine 164) interacts with K(+).

It belongs to the NnrE/AIBP family. It depends on K(+) as a cofactor.

It catalyses the reaction (6R)-NADHX = (6S)-NADHX. It carries out the reaction (6R)-NADPHX = (6S)-NADPHX. Functionally, catalyzes the epimerization of the S- and R-forms of NAD(P)HX, a damaged form of NAD(P)H that is a result of enzymatic or heat-dependent hydration. This is a prerequisite for the S-specific NAD(P)H-hydrate dehydratase to allow the repair of both epimers of NAD(P)HX. This is NAD(P)H-hydrate epimerase from Paramecium tetraurelia.